The following is a 271-amino-acid chain: Interleukin-1 alpha (271 aa).

Positions 1–112 are excised as a propeptide; the sequence is MAKVPDMFED…DSEEEIIKPR (112 aa). Lys82 is subject to N6-acetyllysine. The interval 82 to 86 is nuclear localization signal (NLS); the sequence is KKRRL. Position 87 is a phosphoserine (Ser87). Residues Asn102 and Asn141 are each glycosylated (N-linked (GlcNAc...) asparagine).

It belongs to the IL-1 family. As to quaternary structure, monomer. Interacts with TMED10; the interaction mediates the translocation from the cytoplasm into the ERGIC (endoplasmic reticulum-Golgi intermediate compartment) and thereby secretion. Interacts with IL1R1. Interacts with S100A13; this interaction is the first step in the export of IL1A, followed by direct translocation of this complex across the plasma membrane. Acetylated within its nuclear localization sequence, which impacts subcellular localization. Post-translationally, proteolytic processed by CAPN1 in a calcium-dependent manner. Cleavage from 31 kDa precursor to 18 kDa biologically active molecules. In terms of processing, phosphorylated. Phosphorylation greatly enhances susceptibility to digestion and promotes the conversion of pre-IL1A alpha to the biologically active IL1A.

The protein localises to the nucleus. The protein resides in the cytoplasm. It localises to the secreted. In terms of biological role, cytokine constitutively present intracellularly in nearly all resting non-hematopoietic cells that plays an important role in inflammation and bridges the innate and adaptive immune systems. After binding to its receptor IL1R1 together with its accessory protein IL1RAP, forms the high affinity interleukin-1 receptor complex. Signaling involves the recruitment of adapter molecules such as MYD88, IRAK1 or IRAK4. In turn, mediates the activation of NF-kappa-B and the three MAPK pathways p38, p42/p44 and JNK pathways. Within the cell, acts as an alarmin and cell death results in its liberation in the extracellular space after disruption of the cell membrane to induce inflammation and alert the host to injury or damage. In addition to its role as a danger signal, which occurs when the cytokine is passively released by cell necrosis, directly senses DNA damage and acts as signal for genotoxic stress without loss of cell integrity. The protein is Interleukin-1 alpha (IL1A) of Cercocebus atys (Sooty mangabey).